A 309-amino-acid polypeptide reads, in one-letter code: Porphobilinogen deaminase (309 aa).

Cys-240 is subject to S-(dipyrrolylmethanemethyl)cysteine.

The protein belongs to the HMBS family. In terms of assembly, monomer. Requires dipyrromethane as cofactor.

It catalyses the reaction 4 porphobilinogen + H2O = hydroxymethylbilane + 4 NH4(+). It participates in porphyrin-containing compound metabolism; protoporphyrin-IX biosynthesis; coproporphyrinogen-III from 5-aminolevulinate: step 2/4. Its function is as follows. Tetrapolymerization of the monopyrrole PBG into the hydroxymethylbilane pre-uroporphyrinogen in several discrete steps. The protein is Porphobilinogen deaminase of Lawsonia intracellularis (strain PHE/MN1-00).